A 942-amino-acid chain; its full sequence is Envelope glycoprotein (942 aa).

A signal peptide spans 1 to 80; that stretch reads MDAGASYMRL…LLWTNMCVRA (80 aa). 23 N-linked (GlcNAc...) asparagine; by host glycosylation sites follow: Asn-51, Asn-98, Asn-131, Asn-176, Asn-228, Asn-331, Asn-348, Asn-354, Asn-370, Asn-379, Asn-400, Asn-404, Asn-435, Asn-441, Asn-447, Asn-457, Asn-467, Asn-481, Asn-493, Asn-503, Asn-509, Asn-527, and Asn-534. Residues 81 to 799 lie on the Extracellular side of the membrane; it reads EDYITLISDP…SLKEVFDWSG (719 aa). Positions 631–651 are fusion peptide; that stretch reads GVGLVIMLVIMAIVAAAGASL. 2 coiled-coil regions span residues 663–713 and 754–789; these read KAAV…RIML and RELQGYDGNLTMLLRESARQTQLAEEQVRRIPDVWE. The tract at residues 697–713 is immunosuppression; the sequence is LEARVARVEAITDRIML. A helical membrane pass occupies residues 800–820; the sequence is WFSWLKYIPIIVVGLVGCILI. Residues 821-942 are Cytoplasmic-facing; the sequence is RAVICVCQPL…VDCETWGKGD (122 aa).

In terms of assembly, the mature envelope protein (Env) consists of a trimer of SU-TM heterodimers attached by noncovalent interactions or by a labile interchain disulfide bond. In terms of processing, specific enzymatic cleavages in vivo yield mature proteins. Envelope glycoproteins are synthesized as an inactive precursor that is N-glycosylated and processed likely by host cell furin or by a furin-like protease in the Golgi to yield the mature SU and TM proteins. The cleavage site between SU and TM requires the minimal sequence [KR]-X-[KR]-R.

The protein resides in the virion membrane. The protein localises to the host cell membrane. Its function is as follows. The surface protein (SU) attaches the virus to the host cell by binding to its receptor. This interaction triggers the refolding of the transmembrane protein (TM) and is thought to activate its fusogenic potential by unmasking its fusion peptide. Fusion occurs at the host cell plasma membrane. The transmembrane protein (TM) acts as a class I viral fusion protein. Under the current model, the protein has at least 3 conformational states: pre-fusion native state, pre-hairpin intermediate state, and post-fusion hairpin state. During viral and target cell membrane fusion, the coiled coil regions (heptad repeats) assume a trimer-of-hairpins structure, positioning the fusion peptide in close proximity to the C-terminal region of the ectodomain. The formation of this structure appears to drive apposition and subsequent fusion of viral and target cell membranes. Membranes fusion leads to delivery of the nucleocapsid into the cytoplasm. The polypeptide is Envelope glycoprotein (env) (Caprine arthritis encephalitis virus (strain 63) (CAEV-63)).